Consider the following 181-residue polypeptide: Putative manganese efflux pump MntP (181 aa).

A run of 5 helical transmembrane segments spans residues 35 to 55, 59 to 79, 102 to 122, 126 to 146, and 161 to 181; these read IIFGVIEGLTPLVGWALGSIA, VADWDHWIAFTLLLILGLLMI, AATGFATSIDAMAVGVSLAFI, ILITAAAIGLATFLMVTLGVM, and ILGGLALMGVGTVILYEHLTM.

The protein belongs to the MntP (TC 9.B.29) family.

The protein localises to the cell inner membrane. Its function is as follows. Probably functions as a manganese efflux pump. The chain is Putative manganese efflux pump MntP from Nitrosomonas eutropha (strain DSM 101675 / C91 / Nm57).